A 397-amino-acid polypeptide reads, in one-letter code: Elongation factor Tu (397 aa).

Residues 10–206 (KPHVNIGTIG…AVDENIPQPE (197 aa)) enclose the tr-type G domain. Positions 19–26 (GHVDHGKT) are G1. 19–26 (GHVDHGKT) contacts GTP. Residue threonine 26 coordinates Mg(2+). Residues 62-66 (GITIS) are G2. A G3 region spans residues 83–86 (DCPG). GTP-binding positions include 83-87 (DCPGH) and 138-141 (NKAD). Positions 138–141 (NKAD) are G4. Residues 176–178 (SAL) are G5.

The protein belongs to the TRAFAC class translation factor GTPase superfamily. Classic translation factor GTPase family. EF-Tu/EF-1A subfamily. In terms of assembly, monomer.

The protein resides in the cytoplasm. The enzyme catalyses GTP + H2O = GDP + phosphate + H(+). In terms of biological role, GTP hydrolase that promotes the GTP-dependent binding of aminoacyl-tRNA to the A-site of ribosomes during protein biosynthesis. In Streptomyces cinnamoneus (Streptoverticillium cinnamoneum), this protein is Elongation factor Tu.